The sequence spans 641 residues: Sodium-dependent nutrient amino acid transporter 1 (641 aa).

A compositionally biased stretch (polar residues) spans 1–21; that stretch reads MELKNIEQQPQLQNGNGTATE. The segment at 1–37 is disordered; the sequence is MELKNIEQQPQLQNGNGTATENNEKGEQKPTEGGERT. Residues 1 to 38 are Cytoplasmic-facing; that stretch reads MELKNIEQQPQLQNGNGTATENNEKGEQKPTEGGERTN. A compositionally biased stretch (basic and acidic residues) spans 22-35; the sequence is NNEKGEQKPTEGGE. The next 3 membrane-spanning stretches (helical) occupy residues 39 to 59, 72 to 92, and 125 to 145; these read WGNG…LGNV, GAFL…MYYL, and TVCI…YLFV. 3 N-linked (GlcNAc...) asparagine glycosylation sites follow: Asn-181, Asn-190, and Asn-198. Helical transmembrane passes span 229–249, 258–278, 307–327, 341–361, 401–421, 441–461, 474–494, 516–536, and 552–572; these read PDWK…LVIM, AAYF…GRAV, AVVQ…MFAS, IVTT…FAIL, LFSV…IVAL, VALV…TPGG, TYVV…IYGL, CWSF…MATI, and IAGW…GIWY.

Belongs to the sodium:neurotransmitter symporter (SNF) (TC 2.A.22) family.

Its subcellular location is the membrane. Its function is as follows. Unusual broad substrate spectrum amino acid:sodium cotransporter that promotes absorption of the D isomers of essential amino acids. Neutral amino acids are the preferred substrates, especially methionine and phenylalanine. The polypeptide is Sodium-dependent nutrient amino acid transporter 1 (Drosophila willistoni (Fruit fly)).